Reading from the N-terminus, the 267-residue chain is MKHVKAVIFDWAGTVVDYGSLAPMGAFVETFGQFGVPITIDEARGPMGMAKRPHIAALMALPRVAQAWTDKYGHAPDDADIDAVYDVFVPKNIAVAASYSSVIPGVADVASALRGDDIRIGTTTGYTREIMAEIVPGAAAQGFSPDSIVCTGDTAEGRPSPYMIYRTLPELGVWRAKEAIKVDDTEVGIEEGINGGTWTVGVSVSGNAFGMAEGDVKALAPDEFAWRRNAAIQKLQAAGAHYVIDSVADLMPVVYDIEARLARGERP.

The active-site Nucleophile is D10. Mg(2+) is bound by residues D10 and A12. The Schiff-base intermediate with substrate role is filled by K51. Residue D184 coordinates Mg(2+).

The protein belongs to the HAD-like hydrolase superfamily. PhnX family. As to quaternary structure, homodimer. Mg(2+) serves as cofactor.

The catalysed reaction is phosphonoacetaldehyde + H2O = acetaldehyde + phosphate + H(+). Involved in phosphonate degradation. The protein is Phosphonoacetaldehyde hydrolase of Paraburkholderia xenovorans (strain LB400).